The sequence spans 702 residues: Acetylcholinesterase (702 aa).

Positions 1–36 (MEIRGLITRLLGPCHLRHLILCSLGLYSILVQSVHC) are cleaved as a signal peptide. The segment at 107 to 134 (HIHSTTTRRRGLTRRESSSDATDSDPLV) is disordered. N187 carries an N-linked (GlcNAc...) asparagine glycan. A disulfide bond links C195 and C222. Catalysis depends on S327, which acts as the Acyl-ester intermediate. Residues C381 and C394 are joined by a disulfide bond. Catalysis depends on charge relay system residues E453 and H567. Residues C529 and C650 are joined by a disulfide bond. An N-linked (GlcNAc...) asparagine glycan is attached at N637.

This sequence belongs to the type-B carboxylesterase/lipase family.

The protein resides in the synapse. It localises to the secreted. Its subcellular location is the cell membrane. It carries out the reaction acetylcholine + H2O = choline + acetate + H(+). Rapidly hydrolyzes choline released into the synapse. The sequence is that of Acetylcholinesterase (ACHE1) from Culex pipiens (House mosquito).